We begin with the raw amino-acid sequence, 156 residues long: ATP synthase subunit b (156 aa).

Residues 7-29 traverse the membrane as a helical segment; it reads LLGQAIAFFFFVTFCMKYVWPPL.

The protein belongs to the ATPase B chain family. F-type ATPases have 2 components, F(1) - the catalytic core - and F(0) - the membrane proton channel. F(1) has five subunits: alpha(3), beta(3), gamma(1), delta(1), epsilon(1). F(0) has three main subunits: a(1), b(2) and c(10-14). The alpha and beta chains form an alternating ring which encloses part of the gamma chain. F(1) is attached to F(0) by a central stalk formed by the gamma and epsilon chains, while a peripheral stalk is formed by the delta and b chains.

Its subcellular location is the cell inner membrane. F(1)F(0) ATP synthase produces ATP from ADP in the presence of a proton or sodium gradient. F-type ATPases consist of two structural domains, F(1) containing the extramembraneous catalytic core and F(0) containing the membrane proton channel, linked together by a central stalk and a peripheral stalk. During catalysis, ATP synthesis in the catalytic domain of F(1) is coupled via a rotary mechanism of the central stalk subunits to proton translocation. In terms of biological role, component of the F(0) channel, it forms part of the peripheral stalk, linking F(1) to F(0). This chain is ATP synthase subunit b, found in Photobacterium profundum (strain SS9).